A 207-amino-acid chain; its full sequence is MGRNREDDITPLQQETLDEICRYVSAKGYPPTVKEMSETFGISHASVHDRINQLVRKGYLKREEGKARGLTVTKHPQTNAVALVAVPIVGTVAAGHPIFAHENITGEVLVEASVVGSGKCFALYTQGDSMIDAGINDGDLIIVRRQPIAEDGDIVIALLDDEATVKRLKIDNELIELVPENPRLKPIRVKPEDELRILGKVVGRKRI.

The segment at residues 33-52 (VKEMSETFGISHASVHDRIN) is a DNA-binding region (H-T-H motif). Catalysis depends on for autocatalytic cleavage activity residues Ser129 and Lys166.

The protein belongs to the peptidase S24 family. Homodimer.

It carries out the reaction Hydrolysis of Ala-|-Gly bond in repressor LexA.. In terms of biological role, represses a number of genes involved in the response to DNA damage (SOS response), including recA and lexA. In the presence of single-stranded DNA, RecA interacts with LexA causing an autocatalytic cleavage which disrupts the DNA-binding part of LexA, leading to derepression of the SOS regulon and eventually DNA repair. In Oleidesulfovibrio alaskensis (strain ATCC BAA-1058 / DSM 17464 / G20) (Desulfovibrio alaskensis), this protein is LexA repressor.